Here is a 282-residue protein sequence, read N- to C-terminus: Hydroxyethylthiazole kinase 2 (282 aa).

Residue Met-44 participates in substrate binding. 2 residues coordinate ATP: Arg-120 and Ser-179. Residue Gly-206 coordinates substrate.

It belongs to the Thz kinase family. Requires Mg(2+) as cofactor.

It carries out the reaction 5-(2-hydroxyethyl)-4-methylthiazole + ATP = 4-methyl-5-(2-phosphooxyethyl)-thiazole + ADP + H(+). Its pathway is cofactor biosynthesis; thiamine diphosphate biosynthesis; 4-methyl-5-(2-phosphoethyl)-thiazole from 5-(2-hydroxyethyl)-4-methylthiazole: step 1/1. Functionally, catalyzes the phosphorylation of the hydroxyl group of 4-methyl-5-beta-hydroxyethylthiazole (THZ). This Methanosphaera stadtmanae (strain ATCC 43021 / DSM 3091 / JCM 11832 / MCB-3) protein is Hydroxyethylthiazole kinase 2.